We begin with the raw amino-acid sequence, 318 residues long: Strigolactone esterase D14 (318 aa).

Residues 1 to 11 are compositionally biased toward pro residues; it reads MLRSTHPPPSS. The interval 1 to 48 is disordered; that stretch reads MLRSTHPPPSSPSSSSSGGGGGGGSSASSSSEKTMVGGGGGGGGGSGS. The segment covering 36 to 47 has biased composition (gly residues); that stretch reads VGGGGGGGGGSG. The Nucleophile role is filled by Ser-147. Substrate contacts are provided by Ser-147 and Cys-241. Catalysis depends on residues Asp-268 and His-297. A substrate-binding site is contributed by His-297.

Belongs to the AB hydrolase superfamily. As to quaternary structure, interacts with D53. The interaction between D53 and D14 is enhanced in the presence of strigolactones. The interaction with D53 occurs in the presence of (2'R) stereoisomers of strigolactones, but not (2'S) stereoisomers. Interacts with SLR1 in a strigolactone-dependent manner. Interacts with D3 in a strigolactone-dependent manner. Expressed in the parenchyma cells of the root stele and lateral roots, vascular tissues of vein and leaf sheath, ligule base, auricle base and stem base.

It localises to the cytoplasm. The protein resides in the nucleus. Functionally, involved in strigolactone (SL) signaling pathway. May function downstream of SL synthesis, as a component of hormone signaling or as an enzyme that participates in the conversion of SL to the bioactive form. Strigolactones are hormones that inhibit tillering and shoot branching through the MAX-dependent pathway, contribute to the regulation of shoot architectural response to phosphate-limiting conditions and function as rhizosphere signal that stimulates hyphal branching of arbuscular mycorrhizal fungi and trigger seed germination of root parasitic weeds. Strigolactone-dependent association of D14 with D3 and D53 (a repressor of SL signaling) triggers D53 ubiquitination and degradation. Hydrolyzes the butenolide ring of SLs. A reaction product D-OH is trapped in the cavity of D14, inducing the interaction with SLR1, and probably with other proteins such as D3 and D53. Contributes to the negative regulation of gibberellin signaling. This is Strigolactone esterase D14 from Oryza sativa subsp. japonica (Rice).